We begin with the raw amino-acid sequence, 81 residues long: MQPLGIIAIAALVVAIILAIVVWTIVFIEYRRIKKQRRIDCLLDRITERAEDSGNESEGDREKLSKLVEMGHHAPWDIDDL.

Over 1-7 (MQPLGII) the chain is Extracellular. Residues 8–28 (AIAALVVAIILAIVVWTIVFI) traverse the membrane as a helical segment. At 29–81 (EYRRIKKQRRIDCLLDRITERAEDSGNESEGDREKLSKLVEMGHHAPWDIDDL) the chain is on the cytoplasmic side. S53 and S57 each carry phosphoserine; by host CK2.

It belongs to the HIV-1 VPU protein family. As to quaternary structure, homopentamer. Interacts with host CD4 and BRTC; these interactions induce proteasomal degradation of CD4. Interacts with host BST2; this interaction leads to the degradation of host BST2. Interacts with host FBXW11. Interacts with host AP1M1; this interaction plays a role in the mistrafficking and subsequent degradation of host BST2. Interacts with host RANBP2; this interaction allows Vpu to down-regulate host BLM sumoylation. In terms of processing, phosphorylated by host CK2. This phosphorylation is necessary for interaction with human BTRC and degradation of CD4.

It localises to the host membrane. With respect to regulation, ion channel activity is inhibited by hexamethylene amiloride in vitro. Functionally, enhances virion budding by targeting host CD4 and Tetherin/BST2 to proteasome degradation. Degradation of CD4 prevents any unwanted premature interactions between viral Env and its host receptor CD4 in the endoplasmic reticulum. Degradation of antiretroviral protein Tetherin/BST2 is important for virion budding, as BST2 tethers new viral particles to the host cell membrane. Mechanistically, Vpu bridges either CD4 or BST2 to BTRC, a substrate recognition subunit of the Skp1/Cullin/F-box protein E3 ubiquitin ligase, induces their ubiquitination and subsequent proteasomal degradation. The alteration of the E3 ligase specificity by Vpu seems to promote the degradation of host IKBKB, leading to NF-kappa-B down-regulation and subsequent apoptosis. Acts as a viroporin that forms an oligomeric ion channel in membranes. Modulates the host DNA repair mechanisms to promote degradation of nuclear viral cDNA in cells that are already productively infected in order to suppress immune sensing and proviral hyper-integration (superinfection). Manipulates PML-NBs and modulates SUMOylation of host BLM protein thereby enhancing its DNA-end processing activity toward viral unintegrated linear DNA. Also inhibits RAD52-mediated homologous repair of viral cDNA, preventing the generation of dead-end circular forms of single copies of the long terminal repeat and permitting sustained nucleolytic attack. This is Protein Vpu from Human immunodeficiency virus type 1 group M subtype D (isolate ELI) (HIV-1).